Reading from the N-terminus, the 171-residue chain is Small ribosomal subunit protein mS25 (171 aa).

It belongs to the mitochondrion-specific ribosomal protein mS25 family. In terms of assembly, component of the mitochondrial ribosome small subunit (28S) which comprises a 12S rRNA and about 30 distinct proteins.

It localises to the mitochondrion. This Mus musculus (Mouse) protein is Small ribosomal subunit protein mS25 (Mrps25).